Here is a 119-residue protein sequence, read N- to C-terminus: Large ribosomal subunit protein bL20 (119 aa).

It belongs to the bacterial ribosomal protein bL20 family.

Binds directly to 23S ribosomal RNA and is necessary for the in vitro assembly process of the 50S ribosomal subunit. It is not involved in the protein synthesizing functions of that subunit. This Methylocella silvestris (strain DSM 15510 / CIP 108128 / LMG 27833 / NCIMB 13906 / BL2) protein is Large ribosomal subunit protein bL20.